Consider the following 591-residue polypeptide: MACLECKKRKQKCDGQKPCRRCTKLNVKCIYGTDRRKDKRKIKDGSNMFIFKNQTLCNDKINGIVPHPLSHDTITTKETWEPSYPLFSDDINPADIISMENTDGSIPLQFDLDFTSLESCDVNDFLRLIGDTFPANDADTLDMNQMGGFNTPSISHNTQDDKSQIAIQRNRLIDVIFGDDSHTPPGILREHIFELSERHEDLEALDFDDNGKFLLSTVLCLGALTLRKRELLNRDSNQPSTNGIPEVAAGAYKYYTIATDLIPAVHAAPNIDGFCGLVLMANFMTIMIPLEGQLYLSNNALEVAVALNFHKRESYDEMIVSNPAQLGVFLLFWNLWCSSCMLATLLGKQPFLTLDNISLPPPHQMQHTVSSSPLSINFMRLRIQLATLQTKIFQRLYVYGSLNKVLFQEIETELSLLSTQISNMKCYPIYDEGLFYRSKVLMLELSCLKAHNAFLLYRPNLIQKKSLHAVDAAKHIILEIWSHYTKQFPKNEKDLVDHLDWNFSYPLRTASLTLSISCVILQKYQQSLNFLEEYGIFEYNLALGVLNDLIQVVPIEKRLINLLTVSRTTVEDANESNREDSLRFWTNMLMC.

The zn(2)-C6 fungal-type DNA-binding region spans 3 to 29; sequence CLECKKRKQKCDGQKPCRRCTKLNVKC.

It localises to the nucleus. Functionally, transcription factor involved in regulation of the PUL gene cluster that mediates the formation of pulcherrimin, a red iron-containing pigment composed of two cyclized and modified leucine molecules that acts as a siderophore, a chelator that binds iron outside the cell for subsequent uptake. The polypeptide is Transcriptional regulator PUL4 (Kluyveromyces lactis (strain ATCC 8585 / CBS 2359 / DSM 70799 / NBRC 1267 / NRRL Y-1140 / WM37) (Yeast)).